A 538-amino-acid chain; its full sequence is Lipid scramblase CLPTM1L (538 aa).

Topologically, residues 1 to 9 (MFPKTSFTS) are cytoplasmic. A helical membrane pass occupies residues 10–30 (LIVGVFLLYVLHTCWVMYGIV). At 31–284 (YTKPCEKRRA…IKGIFVDTNL (254 aa)) the chain is on the extracellular side. N-linked (GlcNAc...) asparagine glycosylation is found at Asn-90 and Asn-100. Positions 140-166 (ISLITGQDEPEKPDQQKQSSDSELDRP) are disordered. Residue Asn-229 is glycosylated (N-linked (GlcNAc...) asparagine). A helical membrane pass occupies residues 285–305 (YFLALTFFVAAFHLLFDFLAF). Topologically, residues 306–324 (KNDISFWKHKKSMVGMSSK) are cytoplasmic. Residues 325–341 (AVLWRCFSTIVIFLYLL) form a helical membrane-spanning segment. Residues 342–402 (DEQTSLLVLV…TEEYDTLAMK (61 aa)) lie on the Extracellular side of the membrane. A helical membrane pass occupies residues 403–423 (YLSYLLYPLCVGGAVYALVFV). Over 424–428 (KYKSW) the chain is Cytoplasmic. A helical transmembrane segment spans residues 429-449 (YSWIINSLVNGVYAFGFLFML). Residues 450–538 (PQLFVNYKLK…EKPKGKSHED (89 aa)) lie on the Extracellular side of the membrane.

The protein belongs to the CLPTM1 family.

It is found in the endoplasmic reticulum membrane. It catalyses the reaction a 6-(alpha-D-glucosaminyl)-1-(1,2-diacyl-sn-glycero-3-phospho)-1D-myo-inositol(in) = a 6-(alpha-D-glucosaminyl)-1-(1,2-diacyl-sn-glycero-3-phospho)-1D-myo-inositol(out). It carries out the reaction 6-(alpha-D-glucosaminyl)-(1-octadecanoyl,2-(9Z)-octadecenoyl-sn-glycero-3-phospho)-1D-myo-inositol(in) = 6-(alpha-D-glucosaminyl)-(1-octadecanoyl,2-(9Z)-octadecenoyl-sn-glycero-3-phospho)-1D-myo-inositol(out). The enzyme catalyses a 1,2-diacyl-sn-glycero-3-phospho-(1D-myo-inositol)(in) = a 1,2-diacyl-sn-glycero-3-phospho-(1D-myo-inositol)(out). The catalysed reaction is a 1,2-diacyl-sn-glycero-3-phosphocholine(in) = a 1,2-diacyl-sn-glycero-3-phosphocholine(out). It catalyses the reaction a 1,2-diacyl-sn-glycero-3-phosphoethanolamine(in) = a 1,2-diacyl-sn-glycero-3-phosphoethanolamine(out). Scramblase that mediates the translocation of glucosaminylphosphatidylinositol (alpha-D-GlcN-(1-6)-(1,2-diacyl-sn-glycero-3-phospho)-1D-myo-inositol, GlcN-PI) across the endoplasmic reticulum (ER) membrane, from the cytosolic leaflet to the luminal leaflet of the ER membrane, where it participates in the biosynthesis of glycosylphosphatidylinositol (GPI). GPI is a lipid glycoconjugate involved in post-translational modification of proteins. Can also translocate 1,2-diacyl-sn-glycero-3-phospho-(1D-myo-inositol) (phosphatidylinositol or PI), as well as several other phospholipids (1,2-diacyl-sn-glycero-3-phosphocholine, 1,2-diacyl-sn-glycero-3-phosphoethanolamine), and N-acetylglucosaminylphosphatidylinositol (GlcNAc-PI) in vitro. This Danio rerio (Zebrafish) protein is Lipid scramblase CLPTM1L (clptm1l).